Consider the following 418-residue polypeptide: MIHSLFLINSSGDIFLEKHWKSVVSRSVCDYFFEAQERATEAENVPPVIPTPHHYLLSVYRHKIFFVAVIQTEVPPLFVIEFLHRVVDTFQDYFGVCSEPVIKDNVVVVYEVLEEMLDNGFPLATESNILKELIKPPTILRTVVNTITGSTNVGDQLPTGQLSVVPWRRTGVKYTNNEAYFDVVEEIDAIIDKSGSTVTAEIQGVIDACVKLTGMPDLTLSFMNPRLLDDVSFHPCVRFKRWESERILSFIPPDGNFRLLAYHVSAQNLVAIPVYVKHSISFRDSSSLGRFEITVGPKQTMGKTIEGVIVTSQMPKGVLNMSLTPSQGTHTFDPVTKMLSWDVGKINPQKLPSLKGTMGLQVGASKPDENPTINLQFKIQQLAISGLKVNRLDMYGEKYKPFKGIKYMTKAGKFQVRT.

In terms of domain architecture, MHD spans 176–417 (NNEAYFDVVE…MTKAGKFQVR (242 aa)).

The protein belongs to the adaptor complexes medium subunit family. As to quaternary structure, adaptor protein complex 3 (AP-3) is a heterotetramer composed of two large adaptins (delta-type subunit AP3D1 and beta-type subunit AP3B1 or AP3B2), a medium adaptin (mu-type subunit AP3M1 or AP3M2) and a small adaptin (sigma-type subunit APS1 or AP3S2). AP-3 associates with the BLOC-1 complex.

The protein localises to the golgi apparatus. It is found in the cytoplasmic vesicle membrane. Functionally, component of the adaptor complexes which link clathrin to receptors in coated vesicles. Clathrin-associated protein complexes are believed to interact with the cytoplasmic tails of membrane proteins, leading to their selection and concentration. Ap47 is a subunit of the plasma membrane adaptor. In concert with the BLOC-1 complex, AP-3 is required to target cargos into vesicles assembled at cell bodies for delivery into neurites and nerve terminals. This Mus musculus (Mouse) protein is AP-3 complex subunit mu-2 (Ap3m2).